Here is an 839-residue protein sequence, read N- to C-terminus: Probable beta-glucosidase I (839 aa).

N-linked (GlcNAc...) asparagine glycosylation occurs at Asn-197. Asp-225 is an active-site residue. A PA14 domain is found at 395–555 (DGKTGFSFKV…GQEELISNAV (161 aa)). Asn-620 is a glycosylation site (N-linked (GlcNAc...) asparagine).

This sequence belongs to the glycosyl hydrolase 3 family.

The protein localises to the secreted. It catalyses the reaction Hydrolysis of terminal, non-reducing beta-D-glucosyl residues with release of beta-D-glucose.. It functions in the pathway glycan metabolism; cellulose degradation. Beta-glucosidases are one of a number of cellulolytic enzymes involved in the degradation of cellulosic biomass. Catalyzes the last step releasing glucose from the inhibitory cellobiose. This is Probable beta-glucosidase I (bglI) from Aspergillus oryzae (strain ATCC 42149 / RIB 40) (Yellow koji mold).